We begin with the raw amino-acid sequence, 160 residues long: SsrA-binding protein (160 aa).

The protein belongs to the SmpB family.

Its subcellular location is the cytoplasm. Functionally, required for rescue of stalled ribosomes mediated by trans-translation. Binds to transfer-messenger RNA (tmRNA), required for stable association of tmRNA with ribosomes. tmRNA and SmpB together mimic tRNA shape, replacing the anticodon stem-loop with SmpB. tmRNA is encoded by the ssrA gene; the 2 termini fold to resemble tRNA(Ala) and it encodes a 'tag peptide', a short internal open reading frame. During trans-translation Ala-aminoacylated tmRNA acts like a tRNA, entering the A-site of stalled ribosomes, displacing the stalled mRNA. The ribosome then switches to translate the ORF on the tmRNA; the nascent peptide is terminated with the 'tag peptide' encoded by the tmRNA and targeted for degradation. The ribosome is freed to recommence translation, which seems to be the essential function of trans-translation. The chain is SsrA-binding protein from Escherichia coli O6:K15:H31 (strain 536 / UPEC).